A 191-amino-acid polypeptide reads, in one-letter code: dTTP/UTP pyrophosphatase (191 aa).

Residue Asp-69 is the Proton acceptor of the active site.

Belongs to the Maf family. YhdE subfamily. Requires a divalent metal cation as cofactor.

Its subcellular location is the cytoplasm. It carries out the reaction dTTP + H2O = dTMP + diphosphate + H(+). The enzyme catalyses UTP + H2O = UMP + diphosphate + H(+). Nucleoside triphosphate pyrophosphatase that hydrolyzes dTTP and UTP. May have a dual role in cell division arrest and in preventing the incorporation of modified nucleotides into cellular nucleic acids. This is dTTP/UTP pyrophosphatase from Desulforamulus reducens (strain ATCC BAA-1160 / DSM 100696 / MI-1) (Desulfotomaculum reducens).